The sequence spans 554 residues: Hydroxylamine reductase (554 aa).

[2Fe-2S] cluster is bound by residues C3, C6, C18, and C25. Residues H252, E276, C320, C408, C436, C461, E495, and K497 each contribute to the hybrid [4Fe-2O-2S] cluster site. C408 is subject to Cysteine persulfide.

Belongs to the HCP family. Requires [2Fe-2S] cluster as cofactor. The cofactor is hybrid [4Fe-2O-2S] cluster.

It is found in the cytoplasm. It carries out the reaction A + NH4(+) + H2O = hydroxylamine + AH2 + H(+). Catalyzes the reduction of hydroxylamine to form NH(3) and H(2)O. The protein is Hydroxylamine reductase of Shewanella loihica (strain ATCC BAA-1088 / PV-4).